The following is a 124-amino-acid chain: Flagellar transcriptional regulator FlhD (124 aa).

Belongs to the FlhD family. Homodimer; disulfide-linked. Forms a heterohexamer composed of two FlhC and four FlhD subunits. Each FlhC binds a FlhD dimer, forming a heterotrimer, and a hexamer assembles by dimerization of two heterotrimers.

Its subcellular location is the cytoplasm. Functions in complex with FlhC as a master transcriptional regulator that regulates transcription of several flagellar and non-flagellar operons by binding to their promoter region. Activates expression of class 2 flagellar genes, including fliA, which is a flagellum-specific sigma factor that turns on the class 3 genes. Also regulates genes whose products function in a variety of physiological pathways. This Pectobacterium carotovorum (Erwinia carotovora) protein is Flagellar transcriptional regulator FlhD.